The primary structure comprises 200 residues: 2-phospho-L-lactate guanylyltransferase (200 aa).

The protein belongs to the CofC family. In terms of assembly, homodimer.

It carries out the reaction (2S)-2-phospholactate + GTP + H(+) = (2S)-lactyl-2-diphospho-5'-guanosine + diphosphate. It functions in the pathway cofactor biosynthesis; coenzyme F420 biosynthesis. Functionally, guanylyltransferase that catalyzes the activation of (2S)-2-phospholactate (2-PL) as (2S)-lactyl-2-diphospho-5'-guanosine, via the condensation of 2-PL with GTP. It is involved in the biosynthesis of coenzyme F420, a hydride carrier cofactor. The polypeptide is 2-phospho-L-lactate guanylyltransferase (Ferroglobus placidus (strain DSM 10642 / AEDII12DO)).